Consider the following 72-residue polypeptide: Conotoxin VnMKLT2-011 (72 aa).

An N-terminal signal peptide occupies residues 1–23 (MMKLTCVLIIAVLFLTACQLTTA). Residues 24 to 42 (ETRDEYRAVRSSDEVRNSR) constitute a propeptide that is removed on maturation. 3 disulfides stabilise this stretch: Cys-44/Cys-57, Cys-51/Cys-62, and Cys-56/Cys-71.

The protein belongs to the conotoxin O1 superfamily. As to expression, expressed by the venom duct.

It is found in the secreted. The protein is Conotoxin VnMKLT2-011 of Conus ventricosus (Mediterranean cone).